The following is a 303-amino-acid chain: Pantothenate synthetase (303 aa).

A disordered region spans residues 1–21 (MIATGHGGAERRTTAGDGTAR). 48-55 (MGALHDGH) is a binding site for ATP. Residue H55 is the Proton donor of the active site. Q79 is a (R)-pantoate binding site. Q79 is a binding site for beta-alanine. ATP is bound at residue 165 to 168 (GRKD). Q171 contacts (R)-pantoate. 202–205 (ASSR) serves as a coordination point for ATP.

This sequence belongs to the pantothenate synthetase family. In terms of assembly, homodimer.

The protein localises to the cytoplasm. It carries out the reaction (R)-pantoate + beta-alanine + ATP = (R)-pantothenate + AMP + diphosphate + H(+). It functions in the pathway cofactor biosynthesis; (R)-pantothenate biosynthesis; (R)-pantothenate from (R)-pantoate and beta-alanine: step 1/1. In terms of biological role, catalyzes the condensation of pantoate with beta-alanine in an ATP-dependent reaction via a pantoyl-adenylate intermediate. The polypeptide is Pantothenate synthetase (Acidothermus cellulolyticus (strain ATCC 43068 / DSM 8971 / 11B)).